A 300-amino-acid chain; its full sequence is Ornithine carbamoyltransferase (300 aa).

Carbamoyl phosphate contacts are provided by residues 50–53 (STRT), Gln-77, Arg-101, and 128–131 (HPCQ). Residues Asn-159, Asp-219, and 223-224 (SM) contribute to the L-ornithine site. Residues 257-258 (CL) and Arg-285 contribute to the carbamoyl phosphate site.

This sequence belongs to the aspartate/ornithine carbamoyltransferase superfamily. OTCase family.

It localises to the cytoplasm. It carries out the reaction carbamoyl phosphate + L-ornithine = L-citrulline + phosphate + H(+). It functions in the pathway amino-acid degradation; L-arginine degradation via ADI pathway; carbamoyl phosphate from L-arginine: step 2/2. Its function is as follows. Reversibly catalyzes the transfer of the carbamoyl group from carbamoyl phosphate (CP) to the N(epsilon) atom of ornithine (ORN) to produce L-citrulline. The chain is Ornithine carbamoyltransferase from Haloquadratum walsbyi (strain DSM 16790 / HBSQ001).